Here is a 212-residue protein sequence, read N- to C-terminus: Large ribosomal subunit protein uL3 (212 aa).

Over residues 139–153 (LSHRVTGSIGQNQTP) the composition is skewed to polar residues. Positions 139 to 161 (LSHRVTGSIGQNQTPGKVFKGKK) are disordered. Gln-151 bears the N5-methylglutamine mark.

It belongs to the universal ribosomal protein uL3 family. In terms of assembly, part of the 50S ribosomal subunit. Forms a cluster with proteins L14 and L19. In terms of processing, methylated by PrmB.

Its function is as follows. One of the primary rRNA binding proteins, it binds directly near the 3'-end of the 23S rRNA, where it nucleates assembly of the 50S subunit. This Baumannia cicadellinicola subsp. Homalodisca coagulata protein is Large ribosomal subunit protein uL3.